The chain runs to 179 residues: Adenine phosphoribosyltransferase (179 aa).

It belongs to the purine/pyrimidine phosphoribosyltransferase family. As to quaternary structure, homodimer.

It is found in the cytoplasm. The enzyme catalyses AMP + diphosphate = 5-phospho-alpha-D-ribose 1-diphosphate + adenine. The protein operates within purine metabolism; AMP biosynthesis via salvage pathway; AMP from adenine: step 1/1. In terms of biological role, catalyzes a salvage reaction resulting in the formation of AMP, that is energically less costly than de novo synthesis. This chain is Adenine phosphoribosyltransferase, found in Helicobacter pylori (strain ATCC 700392 / 26695) (Campylobacter pylori).